Reading from the N-terminus, the 285-residue chain is Aspartate/glutamate leucyltransferase (285 aa).

It belongs to the R-transferase family. Bpt subfamily.

It is found in the cytoplasm. The enzyme catalyses N-terminal L-glutamyl-[protein] + L-leucyl-tRNA(Leu) = N-terminal L-leucyl-L-glutamyl-[protein] + tRNA(Leu) + H(+). It carries out the reaction N-terminal L-aspartyl-[protein] + L-leucyl-tRNA(Leu) = N-terminal L-leucyl-L-aspartyl-[protein] + tRNA(Leu) + H(+). Functionally, functions in the N-end rule pathway of protein degradation where it conjugates Leu from its aminoacyl-tRNA to the N-termini of proteins containing an N-terminal aspartate or glutamate. The chain is Aspartate/glutamate leucyltransferase from Dinoroseobacter shibae (strain DSM 16493 / NCIMB 14021 / DFL 12).